A 189-amino-acid chain; its full sequence is Translation initiation factor IF-3 (189 aa).

It belongs to the IF-3 family. Monomer.

It localises to the cytoplasm. Its function is as follows. IF-3 binds to the 30S ribosomal subunit and shifts the equilibrium between 70S ribosomes and their 50S and 30S subunits in favor of the free subunits, thus enhancing the availability of 30S subunits on which protein synthesis initiation begins. This chain is Translation initiation factor IF-3, found in Corynebacterium glutamicum (strain R).